The following is a 78-amino-acid chain: DNA-directed RNA polymerase subunit omega (78 aa).

This sequence belongs to the RNA polymerase subunit omega family. In terms of assembly, in cyanobacteria the RNAP catalytic core is composed of 2 alpha, 1 beta, 1 beta', 1 gamma and 1 omega subunit. When a sigma factor is associated with the core the holoenzyme is formed, which can initiate transcription.

It catalyses the reaction RNA(n) + a ribonucleoside 5'-triphosphate = RNA(n+1) + diphosphate. Its function is as follows. Promotes RNA polymerase assembly. Latches the N- and C-terminal regions of the beta' subunit thereby facilitating its interaction with the beta and alpha subunits. This Prochlorococcus marinus (strain MIT 9515) protein is DNA-directed RNA polymerase subunit omega.